The sequence spans 439 residues: ATP-dependent DNA helicase dda (439 aa).

32–39 (GPAGTGKT) lines the ATP pocket.

In terms of assembly, monomer. Interacts with UvsX and gene 32 protein.

It carries out the reaction Couples ATP hydrolysis with the unwinding of duplex DNA at the replication fork by translocating in the 5'-3' direction. This creates two antiparallel DNA single strands (ssDNA). The leading ssDNA polymer is the template for DNA polymerase III holoenzyme which synthesizes a continuous strand.. It catalyses the reaction ATP + H2O = ADP + phosphate + H(+). In terms of biological role, DNA helicase that stimulates viral DNA replication and recombination. Plays a role in T4 DNA replication initiation by selecting and activating DNA origins. Acts by dissociating and reassociating with the DNA molecule being unwound. Unwinds DNA as a monomer in a 5'-3' direction at a rate of 250 bp/s and can efficiently displace proteins from the DNA. This Enterobacteria phage T4 (Bacteriophage T4) protein is ATP-dependent DNA helicase dda (dda).